Here is a 279-residue protein sequence, read N- to C-terminus: Shikimate dehydrogenase (NADP(+)) (279 aa).

Shikimate-binding positions include 14-16 and Thr63; that span reads SIS. Lys67 functions as the Proton acceptor in the catalytic mechanism. Glu79 contacts NADP(+). Shikimate contacts are provided by Asn88 and Asp103. NADP(+) is bound by residues 127–131, 151–156, and Met219; these read GAGGA and NRTYEK. Tyr221 contributes to the shikimate binding site. Gly242 serves as a coordination point for NADP(+).

The protein belongs to the shikimate dehydrogenase family. As to quaternary structure, homodimer.

The enzyme catalyses shikimate + NADP(+) = 3-dehydroshikimate + NADPH + H(+). It participates in metabolic intermediate biosynthesis; chorismate biosynthesis; chorismate from D-erythrose 4-phosphate and phosphoenolpyruvate: step 4/7. In terms of biological role, involved in the biosynthesis of the chorismate, which leads to the biosynthesis of aromatic amino acids. Catalyzes the reversible NADPH linked reduction of 3-dehydroshikimate (DHSA) to yield shikimate (SA). This chain is Shikimate dehydrogenase (NADP(+)), found in Caldicellulosiruptor saccharolyticus (strain ATCC 43494 / DSM 8903 / Tp8T 6331).